The sequence spans 1810 residues: Trinucleotide repeat-containing gene 6B protein (1810 aa).

Acidic residues predominate over residues 1 to 22; that stretch reads MQTNEGEVEEESSSQVEQEDFV. 4 disordered regions span residues 1-221, 235-1080, 1141-1196, and 1293-1329; these read MQTN…PNPI, EEWP…KKQM, MRKD…SSPG, and ALQQ…NMVP. A coiled-coil region spans residues 33–75; sequence GEESKQEKEQEREEQLMEDKKRKKEDKKKKEATQKVTEQKTKV. Composition is skewed to basic and acidic residues over residues 34–52 and 60–77; these read EESK…MEDK and KKKE…KVPE. Residues 37–1028 are interaction with argonaute proteins; sequence KQEKEQEREE…AMKPNSKSMQ (992 aa). Over residues 88-106 the composition is skewed to low complexity; sequence AASPIGSSPSPPVNGGNNA. The segment covering 123–139 has biased composition (basic and acidic residues); the sequence is MPREVPPRFRCQQDHKV. Over residues 165–174 the composition is skewed to low complexity; the sequence is APGANPNNNA. A compositionally biased stretch (polar residues) spans 180 to 190; it reads LLQSESGTAPE. Low complexity-rich tracts occupy residues 207-220 and 248-260; these read GPGA…SPNP and SSEN…SASN. 2 stretches are compositionally biased toward polar residues: residues 261–290 and 306–327; these read PGSE…SGNE and QPPN…TSGQ. Low complexity-rich tracts occupy residues 335–346, 363–380, and 416–425; these read GFSNFNPNSNPS, ETES…GQAS, and NSLNLSSPNP. A compositionally biased stretch (polar residues) spans 438 to 451; the sequence is GNTSRSTDAPSQST. The segment covering 475 to 486 has biased composition (low complexity); it reads SGQSNSGNNGNN. Composition is skewed to polar residues over residues 504-528, 564-575, 611-623, and 655-667; these read GSKS…PQDN, GPNQPNSSTGAW, TGSN…SDSH, and LSNT…QIKQ. The span at 675-688 shows a compositional bias: basic and acidic residues; the sequence is EVPRPEGKSDKGTE. Polar residues-rich tracts occupy residues 774–783 and 793–804; these read QPNQGWTSGK and VKNNNWESSANK. Positions 809 to 824 are enriched in gly residues; it reads WGEGGQNEIGTWGNGG. Residues 846–857 are compositionally biased toward polar residues; that stretch reads TGRQPNSWNKQH. The residue at position 913 (Ser-913) is a Phosphoserine. Composition is skewed to polar residues over residues 934–950, 964–975, 1004–1027, 1057–1072, and 1175–1195; these read NSYN…NSQG, TGKSASVWSKST, ASTT…SKSM, TAGS…SASW, and GNST…SSSP. Residues 1191 to 1700 form a silencing domain; interaction with CNOT1 and PAN3 region; sequence LSSSPGLRAQ…LAEFATEDEV (510 aa). A compositionally biased stretch (low complexity) spans 1295–1307; that stretch reads QQQQQQQQQQQRQ. Ser-1409 is subject to Phosphoserine. Phosphothreonine is present on Thr-1426. Residue Ser-1438 is modified to Phosphoserine. Thr-1441 is subject to Phosphothreonine. The tract at residues 1449–1467 is PABPC1-interacting motif-2 (PAM2); it reads SNASWPPEFQPGVPWKGIQ. Residues 1568–1619 are disordered; that stretch reads SSRNTTPLTRPPPGLTNPKPASPWSSTAPRSVRGWGTQDSRIASASTWSDGG. A compositionally biased stretch (polar residues) spans 1604–1617; that stretch reads TQDSRIASASTWSD. The region spanning 1625–1697 is the RRM domain; sequence YWLVLHNLTP…TTILAEFATE (73 aa). Disordered stretches follow at residues 1706-1740 and 1786-1810; these read QAQP…GPAL and EDPH…SDSI. Residues 1722-1733 are compositionally biased toward polar residues; the sequence is GWQSLETSQNQA. Low complexity predominate over residues 1792-1801; that stretch reads GSPAPLLPGD. Residues Ser-1793 and Ser-1809 each carry the phosphoserine modification.

It belongs to the GW182 family. Interacts with AGO1, AGO2, AGO3 and AGO4. Interacts with CNOT1; the interaction mediates the association with the CCR4-NOT complex. Interacts with PAN3; the interaction mediates the association with the PAN complex. Interacts with MOV10; the interaction is direct and RNA-dependent.

Its subcellular location is the cytoplasm. The protein localises to the P-body. Plays a role in RNA-mediated gene silencing by both micro-RNAs (miRNAs) and short interfering RNAs (siRNAs). Required for miRNA-dependent translational repression and siRNA-dependent endonucleolytic cleavage of complementary mRNAs by argonaute family proteins. As scaffolding protein associates with argonaute proteins bound to partially complementary mRNAs and simultaneously can recruit CCR4-NOT and PAN deadenylase complexes. This chain is Trinucleotide repeat-containing gene 6B protein (Tnrc6b), found in Mus musculus (Mouse).